The sequence spans 165 residues: Chorismate pyruvate-lyase (165 aa).

Positions 35, 77, 115, and 156 each coordinate substrate.

Belongs to the UbiC family. In terms of assembly, monomer.

Its subcellular location is the cytoplasm. It catalyses the reaction chorismate = 4-hydroxybenzoate + pyruvate. It participates in cofactor biosynthesis; ubiquinone biosynthesis. Its function is as follows. Removes the pyruvyl group from chorismate, with concomitant aromatization of the ring, to provide 4-hydroxybenzoate (4HB) for the ubiquinone pathway. In Escherichia coli O17:K52:H18 (strain UMN026 / ExPEC), this protein is Chorismate pyruvate-lyase.